Here is a 197-residue protein sequence, read N- to C-terminus: Probable GTP-binding protein EngB (197 aa).

The 174-residue stretch at 24–197 (DIPEIALAGR…WDAILEKVNK (174 aa)) folds into the EngB-type G domain. GTP-binding positions include 32-39 (GRSNVGKS), 59-63 (GKTQL), 77-80 (DVPG), 144-147 (TKAD), and 176-178 (FSS). Positions 39 and 61 each coordinate Mg(2+).

The protein belongs to the TRAFAC class TrmE-Era-EngA-EngB-Septin-like GTPase superfamily. EngB GTPase family. It depends on Mg(2+) as a cofactor.

Functionally, necessary for normal cell division and for the maintenance of normal septation. The protein is Probable GTP-binding protein EngB of Streptococcus gordonii (strain Challis / ATCC 35105 / BCRC 15272 / CH1 / DL1 / V288).